We begin with the raw amino-acid sequence, 610 residues long: Myoneurin (610 aa).

Residues 24–89 (CDCTIVIGEF…IYTGTLNLDS (66 aa)) form the BTB domain. Positions 169 to 197 (QGALAKKSSQTKKKKKAFNSPKTGQNKTV) are disordered. 2 consecutive short sequence motifs (nuclear localization signal) follow at residues 174 to 190 (KKSS…NSPK) and 257 to 262 (KRKRGK). The span at 188 to 197 (SPKTGQNKTV) shows a compositional bias: polar residues. Residue serine 289 is modified to Phosphoserine. C2H2-type zinc fingers lie at residues 302–324 (PMCN…MRIH), 330–352 (YVCH…VRTH), 358–381 (YKCE…RMHH), 387–409 (YKCD…ARKH), 415–437 (YVCD…VRRH), 443–465 (YVCD…SRKH), 471–493 (YICG…FRSH), and 499–522 (FICE…TKVH). The segment at 521-556 (VHSGADKTLDSSAEDHTLSEQDSIQKSPLSETMDVK) is disordered. Residues 523 to 539 (SGADKTLDSSAEDHTLS) show a composition bias toward basic and acidic residues. Over residues 540 to 550 (EQDSIQKSPLS) the composition is skewed to polar residues.

This sequence belongs to the krueppel C2H2-type zinc-finger protein family. In terms of tissue distribution, mainly expressed in the neuromuscular system. Located in and around synaptic myonuclei in adult muscle. Expression is dysregulated after nerve injury. Also found in the testis, ovary and placenta.

The protein localises to the nucleus. The sequence is that of Myoneurin (MYNN) from Homo sapiens (Human).